Here is a 209-residue protein sequence, read N- to C-terminus: Uracil phosphoribosyltransferase (209 aa).

5-phospho-alpha-D-ribose 1-diphosphate-binding positions include Arg-79, Arg-104, and 131-139; that span reads DPMLATGNS. Uracil contacts are provided by residues Ile-194 and 199 to 201; that span reads GDA. Asp-200 provides a ligand contact to 5-phospho-alpha-D-ribose 1-diphosphate.

It belongs to the UPRTase family. Mg(2+) is required as a cofactor.

It catalyses the reaction UMP + diphosphate = 5-phospho-alpha-D-ribose 1-diphosphate + uracil. Its pathway is pyrimidine metabolism; UMP biosynthesis via salvage pathway; UMP from uracil: step 1/1. Allosterically activated by GTP. Catalyzes the conversion of uracil and 5-phospho-alpha-D-ribose 1-diphosphate (PRPP) to UMP and diphosphate. This Sinorhizobium fredii (strain NBRC 101917 / NGR234) protein is Uracil phosphoribosyltransferase.